The primary structure comprises 485 residues: Probable aspartic-type endopeptidase opsB (485 aa).

The first 20 residues, 1 to 20 (MRHIFSLLSIVCLMVKHGAC), serve as a signal peptide directing secretion. The Peptidase A1 domain occupies 69–397 (YFCNVTLGTP…DIANNEISIA (329 aa)). Residue Asn72 is glycosylated (N-linked (GlcNAc...) asparagine). Asp87 is a catalytic residue. Asn99, Asn107, Asn111, and Asn132 each carry an N-linked (GlcNAc...) asparagine glycan. Asp285 is an active-site residue. Residues Asn328, Asn337, and Asn402 are each glycosylated (N-linked (GlcNAc...) asparagine). Residue Ser461 is the site of GPI-anchor amidated serine attachment. Residues 462-485 (AGVARADKQYLAIALIAVWFVLGL) constitute a propeptide, removed in mature form.

It belongs to the peptidase A1 family.

The protein localises to the cell membrane. Probable GPI-anchored aspartic-type endopeptidase which contributes to virulence. This chain is Probable aspartic-type endopeptidase opsB (opsB), found in Aspergillus fumigatus (strain ATCC MYA-4609 / CBS 101355 / FGSC A1100 / Af293) (Neosartorya fumigata).